Here is a 749-residue protein sequence, read N- to C-terminus: Probable serine/threonine-protein kinase drkC (749 aa).

Positions 1-31 (MIIINKYIRMNKIAILFSFFILICCTGYSIS) are cleaved as a signal peptide. The Extracellular segment spans residues 32-423 (YKINGINENK…TSPNYQKIIY (392 aa)). Residues 124 to 153 (DRTDQVSTSSSSSSFSEENKKSSSDDSAPA) are disordered. Residues 130–139 (STSSSSSSFS) show a composition bias toward low complexity. 7 N-linked (GlcNAc...) asparagine glycosylation sites follow: Asn-157, Asn-189, Asn-283, Asn-358, Asn-373, Asn-381, and Asn-397. The helical transmembrane segment at 424 to 444 (IVVGVGIAVLLIIAVGIYFII) threads the bilayer. Residues 445–749 (RLRIKNKRLN…QEIVKRLEAM (305 aa)) lie on the Cytoplasmic side of the membrane. Residues 491–749 (IVVQNRIGRG…QEIVKRLEAM (259 aa)) form the Protein kinase domain. Residues 497–505 (IGRGSCAEV) and Lys-518 contribute to the ATP site. The active-site Proton acceptor is the Asp-615.

This sequence belongs to the protein kinase superfamily. TKL Ser/Thr protein kinase family.

It is found in the membrane. The catalysed reaction is L-seryl-[protein] + ATP = O-phospho-L-seryl-[protein] + ADP + H(+). It carries out the reaction L-threonyl-[protein] + ATP = O-phospho-L-threonyl-[protein] + ADP + H(+). This is Probable serine/threonine-protein kinase drkC (drkC) from Dictyostelium discoideum (Social amoeba).